The chain runs to 498 residues: Lysine--tRNA ligase (498 aa).

Glu-401 and Glu-408 together coordinate Mg(2+).

This sequence belongs to the class-II aminoacyl-tRNA synthetase family. In terms of assembly, homodimer. The cofactor is Mg(2+).

The protein localises to the cytoplasm. It catalyses the reaction tRNA(Lys) + L-lysine + ATP = L-lysyl-tRNA(Lys) + AMP + diphosphate. The chain is Lysine--tRNA ligase from Dehalococcoides mccartyi (strain ATCC BAA-2100 / JCM 16839 / KCTC 5957 / BAV1).